Consider the following 151-residue polypeptide: Large ribosomal subunit protein bL17 (151 aa).

It belongs to the bacterial ribosomal protein bL17 family. As to quaternary structure, part of the 50S ribosomal subunit. Contacts protein L32.

This Chlorobium limicola (strain DSM 245 / NBRC 103803 / 6330) protein is Large ribosomal subunit protein bL17.